We begin with the raw amino-acid sequence, 261 residues long: Pantothenate synthetase (261 aa).

Met29–His36 provides a ligand contact to ATP. His36 (proton donor) is an active-site residue. Gln60 lines the (R)-pantoate pocket. Gln60 lines the beta-alanine pocket. Position 147-150 (Gly147–Asp150) interacts with ATP. Gln153 contacts (R)-pantoate. Position 184 to 187 (Leu184 to Arg187) interacts with ATP.

The protein belongs to the pantothenate synthetase family. In terms of assembly, homodimer.

It localises to the cytoplasm. It catalyses the reaction (R)-pantoate + beta-alanine + ATP = (R)-pantothenate + AMP + diphosphate + H(+). It participates in cofactor biosynthesis; (R)-pantothenate biosynthesis; (R)-pantothenate from (R)-pantoate and beta-alanine: step 1/1. Its function is as follows. Catalyzes the condensation of pantoate with beta-alanine in an ATP-dependent reaction via a pantoyl-adenylate intermediate. The sequence is that of Pantothenate synthetase from Francisella tularensis subsp. mediasiatica (strain FSC147).